The primary structure comprises 469 residues: Probable ribonuclease FAU-1 (469 aa).

Belongs to the FAU-1 family.

Probable RNase involved in rRNA stability through maturation and/or degradation of precursor rRNAs. Binds to RNA in loop regions with AU-rich sequences. This Pyrococcus abyssi (strain GE5 / Orsay) protein is Probable ribonuclease FAU-1.